The following is a 187-amino-acid chain: Ribosome-recycling factor (187 aa).

It belongs to the RRF family.

It localises to the cytoplasm. Responsible for the release of ribosomes from messenger RNA at the termination of protein biosynthesis. May increase the efficiency of translation by recycling ribosomes from one round of translation to another. This chain is Ribosome-recycling factor, found in Lactiplantibacillus plantarum (strain ATCC BAA-793 / NCIMB 8826 / WCFS1) (Lactobacillus plantarum).